A 983-amino-acid polypeptide reads, in one-letter code: UPF0182 protein MLBr00644 (983 aa).

7 consecutive transmembrane segments (helical) span residues 19-39 (LIMV…LVDA), 63-83 (VVVF…GLAV), 113-133 (LIGV…AQSY), 175-195 (FVAV…FGGI), 210-230 (LQLV…YWLD), 259-279 (KLIL…AITL), and 287-307 (IGLV…PLIV).

Belongs to the UPF0182 family.

It localises to the cell membrane. The chain is UPF0182 protein MLBr00644 from Mycobacterium leprae (strain Br4923).